Here is a 211-residue protein sequence, read N- to C-terminus: Mitotic spindle assembly checkpoint protein MAD2B (211 aa).

An HORMA domain is found at Gln13–Val203.

Homooligomer. Interacts with rev1. Interacts with rev3l. Interacts with fzr1 (in complex with the anaphase promoting complex APC). May interact with cdc20.

Its subcellular location is the nucleus. The protein localises to the cytoplasm. It is found in the cytoskeleton. It localises to the spindle. Adapter protein able to interact with different proteins and involved in different biological processes. Mediates the interaction between the error-prone DNA polymerase zeta catalytic subunit rev3l and the inserter polymerase rev1, thereby mediating the second polymerase switching in translesion DNA synthesis. Translesion DNA synthesis releases the replication blockade of replicative polymerases, stalled in presence of DNA lesions. May also play a role in signal transduction in response to DNA damage. May regulate the activation of the anaphase promoting complex APC thereby regulating progression through the cell cycle. Through transcriptional regulation may play a role in epithelial-mesenchymal transdifferentiation. This chain is Mitotic spindle assembly checkpoint protein MAD2B (mad2l2), found in Danio rerio (Zebrafish).